A 105-amino-acid chain; its full sequence is U2-lycotoxin-Ls1b (105 aa).

The first 17 residues, 1–17 (MIKYVLISALLVVAVYS), serve as a signal peptide directing secretion. Positions 18–41 (FTIEDNEDALLEEAEDELDTEEER) are excised as a propeptide. Disulfide bonds link Cys51–Cys67, Cys58–Cys97, Cys60–Cys83, and Cys69–Cys81.

This sequence belongs to the neurotoxin 04 (omega-agtx) family. 01 (type I omega-agtx) subfamily. In terms of tissue distribution, expressed by the venom gland.

It localises to the secreted. In terms of biological role, insecticidal to house crickets. It induces an excitatory slow-onset impact that leads to irreversible spastic paralysis. It also modifies human voltage-gated potassium channel Kv1.5/KCNA5. Most likely, it binds to the voltage-sensing domain of the channel, suggesting it does not block the pore but prevents its opening at physiological membrane potentials. The recombinant peptide binds to the channel in an irreversible manner and slows down the hKv1.5 current activation kinetics. It is not toxic to mice, when intracranially injected (at 0.5 ug/g mouse). In Lycosa singoriensis (Wolf spider), this protein is U2-lycotoxin-Ls1b.